The primary structure comprises 269 residues: MRPIIETHSVTMRINGATLVDGIDLSVGSGEMVAIVGPNGAGKSTLLRLLSGDLQPTQGRIELKQADLRSYSAAQLATHRATLSQHVNVTFPFTVEEIVRMGAGDMAIAAAHPLVESAMDEVAIRPLRSRQLPTLSGGEQQRTHFARVLVQLACGEARHGPGLLLLDEPTSSLDLRHQIELVEIAGRRARNGTAVIAILHDLNLAVRFASRIIVIHRGAIVADGPPAQTITDGLIRKVFEVCADIQYHGDGSPVLLPQAMKSIGPGNLL.

An ABC transporter domain is found at 5–242 (IETHSVTMRI…GLIRKVFEVC (238 aa)). 37 to 44 (GPNGAGKS) is an ATP binding site.

The protein belongs to the ABC transporter superfamily. Heme (hemin) importer (TC 3.A.1.14.5) family. The complex is composed of two ATP-binding proteins (HmuV), two transmembrane proteins (HmuU) and a solute-binding protein (HmuT).

It localises to the cell inner membrane. Its function is as follows. Part of the ABC transporter complex HmuTUV involved in hemin import. Responsible for energy coupling to the transport system. This is Hemin import ATP-binding protein HmuV from Nitrobacter winogradskyi (strain ATCC 25391 / DSM 10237 / CIP 104748 / NCIMB 11846 / Nb-255).